An 828-amino-acid polypeptide reads, in one-letter code: Phenylalanine--tRNA ligase beta subunit (828 aa).

The region spanning 43 to 161 (LSKNTNLVVG…DQIALGSNAL (119 aa)) is the tRNA-binding domain. Residues 203–230 (KKKEKKTINYKTKNSKDQTNRKTTPKLN) form a disordered region. In terms of domain architecture, B5 spans 436–519 (RTNPTISLDL…RFYGCHKLPP (84 aa)). Residues aspartate 497, aspartate 503, and aspartate 507 each coordinate Mg(2+). The region spanning 736 to 828 (PKFPTVIRDL…LIKHFRIEIR (93 aa)) is the FDX-ACB domain.

This sequence belongs to the phenylalanyl-tRNA synthetase beta subunit family. Type 1 subfamily. As to quaternary structure, tetramer of two alpha and two beta subunits. The cofactor is Mg(2+).

It localises to the cytoplasm. The catalysed reaction is tRNA(Phe) + L-phenylalanine + ATP = L-phenylalanyl-tRNA(Phe) + AMP + diphosphate + H(+). The chain is Phenylalanine--tRNA ligase beta subunit from Aster yellows witches'-broom phytoplasma (strain AYWB).